A 115-amino-acid polypeptide reads, in one-letter code: Sericin-1 (115 aa).

The interval 1–115 is disordered; that stretch reads GSSGSSGSSG…GGSSSTSSSN (115 aa).

As to expression, produced exclusively in the middle (MSG) section of silk glands.

It localises to the secreted. Provides the silk fibroin thread with a sticky coating. Acts as a cement by sticking silk threads together. The protein is Sericin-1 (SER1) of Galleria mellonella (Greater wax moth).